Here is a 243-residue protein sequence, read N- to C-terminus: Probable 2-phosphosulfolactate phosphatase (243 aa).

It belongs to the ComB family. It depends on Mg(2+) as a cofactor.

The catalysed reaction is (2R)-O-phospho-3-sulfolactate + H2O = (2R)-3-sulfolactate + phosphate. In Prochlorococcus marinus (strain MIT 9303), this protein is Probable 2-phosphosulfolactate phosphatase.